The sequence spans 318 residues: (1S)-1,7-diacetoxy-luvungin A aldo-keto reductase (318 aa).

The Proton donor role is filled by tyrosine 54.

Belongs to the aldo/keto reductase family. In terms of tissue distribution, expressed in flowers, maturing fruits and in juice vesicles.

It carries out the reaction (1S)-1,7-diacetoxy-luvungin A + AH2 + H2O = (1R,2R,3S,8R,10R,11R,15S,16S)-3-(acetyloxy)-15-[(4R)-4-[(2S)-3,3-dimethyloxiran-2-yl]-1,4-dihydroxybutan-2-yl]-2,7,7,11,16-pentamethyl-5-oxo-6-oxatetracyclo[9.7.0.0(2,8).0(12,16)]octadec-12-en-10-yl acetate + acetate + A + H(+). It participates in secondary metabolite biosynthesis; terpenoid biosynthesis. In terms of biological role, aldo-keto reductase involved in the biosynthesis of limonoids triterpene natural products such as limonin, a compound with insecticidal activity responsible for the bitter taste in citrus. Can use (1S)-1,7-diacetoxy-luvungin A as substrate. The polypeptide is (1S)-1,7-diacetoxy-luvungin A aldo-keto reductase (Citrus sinensis (Sweet orange)).